A 192-amino-acid polypeptide reads, in one-letter code: Holliday junction branch migration complex subunit RuvA (192 aa).

The domain I stretch occupies residues 1 to 61; it reads MFEYLKGIVT…DTGITLYGFL (61 aa). The tract at residues 62–137 is domain II; that stretch reads SLEDKELFLK…KLGDYVKKST (76 aa). The flexible linker stretch occupies residues 137–140; that stretch reads TAAA. Residues 141 to 192 form a domain III region; sequence DLTPSLQDALLALVALGYTQKEVDRITPKLAKLPENTADGYVKEALALLLKK.

Belongs to the RuvA family. Homotetramer. Forms an RuvA(8)-RuvB(12)-Holliday junction (HJ) complex. HJ DNA is sandwiched between 2 RuvA tetramers; dsDNA enters through RuvA and exits via RuvB. An RuvB hexamer assembles on each DNA strand where it exits the tetramer. Each RuvB hexamer is contacted by two RuvA subunits (via domain III) on 2 adjacent RuvB subunits; this complex drives branch migration. In the full resolvosome a probable DNA-RuvA(4)-RuvB(12)-RuvC(2) complex forms which resolves the HJ.

The protein localises to the cytoplasm. Its function is as follows. The RuvA-RuvB-RuvC complex processes Holliday junction (HJ) DNA during genetic recombination and DNA repair, while the RuvA-RuvB complex plays an important role in the rescue of blocked DNA replication forks via replication fork reversal (RFR). RuvA specifically binds to HJ cruciform DNA, conferring on it an open structure. The RuvB hexamer acts as an ATP-dependent pump, pulling dsDNA into and through the RuvAB complex. HJ branch migration allows RuvC to scan DNA until it finds its consensus sequence, where it cleaves and resolves the cruciform DNA. The polypeptide is Holliday junction branch migration complex subunit RuvA (Lactobacillus johnsonii (strain CNCM I-12250 / La1 / NCC 533)).